Consider the following 462-residue polypeptide: Cysteine--tRNA ligase (462 aa).

Cys-28 provides a ligand contact to Zn(2+). A 'HIGH' region motif is present at residues 30-40; it reads ITVYDLCHIGH. The Zn(2+) site is built by Cys-210, His-235, and Glu-239. The 'KMSKS' region motif lies at 267–271; sequence KMSKS. Lys-270 is a binding site for ATP.

The protein belongs to the class-I aminoacyl-tRNA synthetase family. In terms of assembly, monomer. Zn(2+) serves as cofactor.

The protein resides in the cytoplasm. It catalyses the reaction tRNA(Cys) + L-cysteine + ATP = L-cysteinyl-tRNA(Cys) + AMP + diphosphate. The chain is Cysteine--tRNA ligase from Erwinia tasmaniensis (strain DSM 17950 / CFBP 7177 / CIP 109463 / NCPPB 4357 / Et1/99).